The chain runs to 137 residues: uncharacterized protein (137 aa).

This is an uncharacterized protein from Bos taurus (Bovine).